The primary structure comprises 152 residues: Nucleoside diphosphate kinase (152 aa).

Residues K11, F59, R87, T93, R104, and N114 each coordinate ATP. H117 serves as the catalytic Pros-phosphohistidine intermediate.

Belongs to the NDK family. Homotetramer. Requires Mg(2+) as cofactor.

It is found in the cytoplasm. The catalysed reaction is dZDP + ATP = dZTP + ADP. The enzyme catalyses a 2'-deoxyribonucleoside 5'-diphosphate + ATP = a 2'-deoxyribonucleoside 5'-triphosphate + ADP. It carries out the reaction a ribonucleoside 5'-diphosphate + ATP = a ribonucleoside 5'-triphosphate + ADP. Its pathway is purine metabolism. In terms of biological role, major role in the synthesis of nucleoside triphosphates other than ATP. The ATP gamma phosphate is transferred to the NDP beta phosphate via a ping-pong mechanism, using a phosphorylated active-site intermediate. Its function is as follows. (Microbial infection) Catalyzes the phosphorylation of dZDP to dZTP, when the bacterium is infected by a phage that produces the substrate for the synthesis of dZTP (2- amino-2'-deoxyadenosine 5'-triphosphate), which is then used by the phage as a DNA polymerase substrate. In Synechococcus sp. (strain CC9311), this protein is Nucleoside diphosphate kinase.